The chain runs to 89 residues: Small ribosomal subunit protein uS15 (89 aa).

It belongs to the universal ribosomal protein uS15 family. Part of the 30S ribosomal subunit. Forms a bridge to the 50S subunit in the 70S ribosome, contacting the 23S rRNA.

In terms of biological role, one of the primary rRNA binding proteins, it binds directly to 16S rRNA where it helps nucleate assembly of the platform of the 30S subunit by binding and bridging several RNA helices of the 16S rRNA. Functionally, forms an intersubunit bridge (bridge B4) with the 23S rRNA of the 50S subunit in the ribosome. In Lysinibacillus sphaericus (strain C3-41), this protein is Small ribosomal subunit protein uS15.